The chain runs to 450 residues: Serine--tRNA ligase, cytoplasmic (450 aa).

238–240 contributes to the L-serine binding site; the sequence is TSE. ATP is bound by residues 271–273 and valine 287; that span reads RRE. Position 294 (glutamate 294) interacts with L-serine. 358–361 provides a ligand contact to ATP; it reads ELVS. Threonine 396 contributes to the L-serine binding site.

It belongs to the class-II aminoacyl-tRNA synthetase family. Type-1 seryl-tRNA synthetase subfamily. Homodimer. The tRNA molecule binds across the dimer.

Its subcellular location is the cytoplasm. It localises to the cytosol. It catalyses the reaction tRNA(Ser) + L-serine + ATP = L-seryl-tRNA(Ser) + AMP + diphosphate + H(+). Catalyzes the attachment of serine to tRNA(Ser) in a two-step reaction: serine is first activated by ATP to form Ser-AMP and then transferred to the acceptor end of tRNA(Ser). This Schizosaccharomyces pombe (strain 972 / ATCC 24843) (Fission yeast) protein is Serine--tRNA ligase, cytoplasmic.